A 259-amino-acid polypeptide reads, in one-letter code: Dihydroorotate dehydrogenase B (NAD(+)), electron transfer subunit (259 aa).

The FAD-binding FR-type domain occupies 2-102 (MQKQNMIVVN…LGPLGHGFPV (101 aa)). Residues 53-56 (RPIS), 70-72 (LYR), and 77-78 (GT) each bind FAD. [2Fe-2S] cluster-binding residues include C221, C226, C229, and C246.

It belongs to the PyrK family. In terms of assembly, heterotetramer of 2 PyrK and 2 PyrD type B subunits. [2Fe-2S] cluster is required as a cofactor. Requires FAD as cofactor.

It participates in pyrimidine metabolism; UMP biosynthesis via de novo pathway; orotate from (S)-dihydroorotate (NAD(+) route): step 1/1. In terms of biological role, responsible for channeling the electrons from the oxidation of dihydroorotate from the FMN redox center in the PyrD type B subunit to the ultimate electron acceptor NAD(+). This is Dihydroorotate dehydrogenase B (NAD(+)), electron transfer subunit from Bacillus cereus (strain 03BB102).